A 176-amino-acid polypeptide reads, in one-letter code: ATP synthase subunit delta (176 aa).

Belongs to the ATPase delta chain family. F-type ATPases have 2 components, F(1) - the catalytic core - and F(0) - the membrane proton channel. F(1) has five subunits: alpha(3), beta(3), gamma(1), delta(1), epsilon(1). F(0) has three main subunits: a(1), b(2) and c(10-14). The alpha and beta chains form an alternating ring which encloses part of the gamma chain. F(1) is attached to F(0) by a central stalk formed by the gamma and epsilon chains, while a peripheral stalk is formed by the delta and b chains.

The protein localises to the cell inner membrane. F(1)F(0) ATP synthase produces ATP from ADP in the presence of a proton or sodium gradient. F-type ATPases consist of two structural domains, F(1) containing the extramembraneous catalytic core and F(0) containing the membrane proton channel, linked together by a central stalk and a peripheral stalk. During catalysis, ATP synthesis in the catalytic domain of F(1) is coupled via a rotary mechanism of the central stalk subunits to proton translocation. Its function is as follows. This protein is part of the stalk that links CF(0) to CF(1). It either transmits conformational changes from CF(0) to CF(1) or is implicated in proton conduction. This Polaromonas sp. (strain JS666 / ATCC BAA-500) protein is ATP synthase subunit delta.